The chain runs to 341 residues: Basic membrane protein B (341 aa).

The N-terminal stretch at 1–14 is a signal peptide; it reads MRIAIFIFGILLTS. The N-palmitoyl cysteine moiety is linked to residue Cys15. Cys15 carries S-diacylglycerol cysteine lipidation.

The protein belongs to the BMP lipoprotein family. As to quaternary structure, monomer.

The protein localises to the cell inner membrane. In terms of biological role, may be part of an ABC-type nucleoside uptake system involved in the purine salvage pathway. This chain is Basic membrane protein B (bmpB), found in Borreliella afzelii (strain PKo) (Borrelia afzelii).